A 213-amino-acid chain; its full sequence is MIGMLTGRVAALGADELVLDVSGVGYLVGAGARTLSRLEPDQDIVLHIETHVREDAFKLYGFLDDIDRAWFVHLQNIQGVGAKAAFAILDTVPVSEIANAAALGDKSTFARAKGVGPKLATRIATELKDKAPPTGRSFSIGLPVHSDDGTTGGAPVAPAGGDSLAREDAVSALVNLGYNESQARQAVAKILRDADSEAPLGDVIRLSLKELAA.

Positions Met-1–Leu-63 are domain I. The interval Asp-64–Leu-142 is domain II. The interval Pro-143–Gly-160 is flexible linker. A domain III region spans residues Gly-161–Ala-213.

Belongs to the RuvA family. In terms of assembly, homotetramer. Forms an RuvA(8)-RuvB(12)-Holliday junction (HJ) complex. HJ DNA is sandwiched between 2 RuvA tetramers; dsDNA enters through RuvA and exits via RuvB. An RuvB hexamer assembles on each DNA strand where it exits the tetramer. Each RuvB hexamer is contacted by two RuvA subunits (via domain III) on 2 adjacent RuvB subunits; this complex drives branch migration. In the full resolvosome a probable DNA-RuvA(4)-RuvB(12)-RuvC(2) complex forms which resolves the HJ.

Its subcellular location is the cytoplasm. Functionally, the RuvA-RuvB-RuvC complex processes Holliday junction (HJ) DNA during genetic recombination and DNA repair, while the RuvA-RuvB complex plays an important role in the rescue of blocked DNA replication forks via replication fork reversal (RFR). RuvA specifically binds to HJ cruciform DNA, conferring on it an open structure. The RuvB hexamer acts as an ATP-dependent pump, pulling dsDNA into and through the RuvAB complex. HJ branch migration allows RuvC to scan DNA until it finds its consensus sequence, where it cleaves and resolves the cruciform DNA. The sequence is that of Holliday junction branch migration complex subunit RuvA from Maricaulis maris (strain MCS10) (Caulobacter maris).